A 337-amino-acid chain; its full sequence is Protein FAM76B (337 aa).

The interval 143–241 (EQRKSLGSTH…INQSTDSGGT (99 aa)) is disordered. Over residues 147-159 (SLGSTHSNSSSSS) the composition is skewed to low complexity. The segment covering 166-187 (HHSKHHHHHHHHHRHSSSHHKI) has biased composition (basic residues). A compositionally biased stretch (basic and acidic residues) spans 213-222 (TPKKKPKLEF). Over residues 226 to 241 (NGDSSSINQSTDSGGT) the composition is skewed to polar residues. Residues 301-326 (KDFVEQLQGKNRELLKQVAALSKGKK) adopt a coiled-coil conformation.

This sequence belongs to the FAM76 family.

Functionally, plays a role in hematopoiesis and immune system development, and participates in the inflammatory response. The sequence is that of Protein FAM76B (fam76b) from Xenopus laevis (African clawed frog).